A 431-amino-acid polypeptide reads, in one-letter code: Histidine--tRNA ligase (431 aa).

It belongs to the class-II aminoacyl-tRNA synthetase family.

It localises to the cytoplasm. The catalysed reaction is tRNA(His) + L-histidine + ATP = L-histidyl-tRNA(His) + AMP + diphosphate + H(+). This is Histidine--tRNA ligase (hisS) from Pyrococcus abyssi (strain GE5 / Orsay).